A 458-amino-acid polypeptide reads, in one-letter code: tRNA modification GTPase MnmE (458 aa).

3 residues coordinate (6S)-5-formyl-5,6,7,8-tetrahydrofolate: Arg-23, Glu-80, and Lys-122. The region spanning 218-380 is the TrmE-type G domain; sequence GMKIVIAGRP…LREHLQQTMG (163 aa). Position 228 (Asn-228) interacts with K(+). Residues 228-233, 247-253, 272-275, and 361-363 each bind GTP; these read NVGKSS, TQIPGTT, DTAG, and SAR. Ser-232 serves as a coordination point for Mg(2+). 3 residues coordinate K(+): Thr-247, Ile-249, and Thr-252. Residue Thr-253 participates in Mg(2+) binding. A (6S)-5-formyl-5,6,7,8-tetrahydrofolate-binding site is contributed by Lys-458.

Belongs to the TRAFAC class TrmE-Era-EngA-EngB-Septin-like GTPase superfamily. TrmE GTPase family. In terms of assembly, homodimer. Heterotetramer of two MnmE and two MnmG subunits. K(+) serves as cofactor.

Its subcellular location is the cytoplasm. Its function is as follows. Exhibits a very high intrinsic GTPase hydrolysis rate. Involved in the addition of a carboxymethylaminomethyl (cmnm) group at the wobble position (U34) of certain tRNAs, forming tRNA-cmnm(5)s(2)U34. This chain is tRNA modification GTPase MnmE, found in Hamiltonella defensa subsp. Acyrthosiphon pisum (strain 5AT).